Reading from the N-terminus, the 136-residue chain is Small ribosomal subunit protein eS17A (136 aa).

The protein belongs to the eukaryotic ribosomal protein eS17 family. As to quaternary structure, component of the small ribosomal subunit (SSU). Mature yeast ribosomes consist of a small (40S) and a large (60S) subunit. The 40S small subunit contains 1 molecule of ribosomal RNA (18S rRNA) and 33 different proteins (encoded by 57 genes). The large 60S subunit contains 3 rRNA molecules (25S, 5.8S and 5S rRNA) and 46 different proteins (encoded by 81 genes).

The protein localises to the cytoplasm. Component of the ribosome, a large ribonucleoprotein complex responsible for the synthesis of proteins in the cell. The small ribosomal subunit (SSU) binds messenger RNAs (mRNAs) and translates the encoded message by selecting cognate aminoacyl-transfer RNA (tRNA) molecules. The large subunit (LSU) contains the ribosomal catalytic site termed the peptidyl transferase center (PTC), which catalyzes the formation of peptide bonds, thereby polymerizing the amino acids delivered by tRNAs into a polypeptide chain. The nascent polypeptides leave the ribosome through a tunnel in the LSU and interact with protein factors that function in enzymatic processing, targeting, and the membrane insertion of nascent chains at the exit of the ribosomal tunnel. This is Small ribosomal subunit protein eS17A from Saccharomyces cerevisiae (strain ATCC 204508 / S288c) (Baker's yeast).